The sequence spans 359 residues: Phospho-N-acetylmuramoyl-pentapeptide-transferase (359 aa).

The next 10 helical transmembrane spans lie at 21 to 41, 73 to 93, 98 to 118, 143 to 163, 166 to 186, 202 to 222, 237 to 257, 261 to 281, 286 to 306, and 336 to 356; these read YITF…FLLG, TMGG…WADL, IWVT…DDYL, GICL…VPFF, VAPD…VGTS, PLVI…NAII, VTVF…FNAY, IFMG…VAII, ILLT…IFQV, and KIIV…VSTL.

The protein belongs to the glycosyltransferase 4 family. MraY subfamily. Mg(2+) is required as a cofactor.

Its subcellular location is the cell inner membrane. The catalysed reaction is UDP-N-acetyl-alpha-D-muramoyl-L-alanyl-gamma-D-glutamyl-meso-2,6-diaminopimeloyl-D-alanyl-D-alanine + di-trans,octa-cis-undecaprenyl phosphate = di-trans,octa-cis-undecaprenyl diphospho-N-acetyl-alpha-D-muramoyl-L-alanyl-D-glutamyl-meso-2,6-diaminopimeloyl-D-alanyl-D-alanine + UMP. It functions in the pathway cell wall biogenesis; peptidoglycan biosynthesis. Its function is as follows. Catalyzes the initial step of the lipid cycle reactions in the biosynthesis of the cell wall peptidoglycan: transfers peptidoglycan precursor phospho-MurNAc-pentapeptide from UDP-MurNAc-pentapeptide onto the lipid carrier undecaprenyl phosphate, yielding undecaprenyl-pyrophosphoryl-MurNAc-pentapeptide, known as lipid I. The polypeptide is Phospho-N-acetylmuramoyl-pentapeptide-transferase (Desulfosudis oleivorans (strain DSM 6200 / JCM 39069 / Hxd3) (Desulfococcus oleovorans)).